Here is an 86-residue protein sequence, read N- to C-terminus: Small ribosomal subunit protein uS17 (86 aa).

This sequence belongs to the universal ribosomal protein uS17 family. As to quaternary structure, part of the 30S ribosomal subunit.

In terms of biological role, one of the primary rRNA binding proteins, it binds specifically to the 5'-end of 16S ribosomal RNA. This is Small ribosomal subunit protein uS17 from Methylococcus capsulatus (strain ATCC 33009 / NCIMB 11132 / Bath).